The sequence spans 162 residues: uncharacterized protein (162 aa).

An N-terminal signal peptide occupies residues M1 to A34.

This is an uncharacterized protein from Archaeoglobus fulgidus (strain ATCC 49558 / DSM 4304 / JCM 9628 / NBRC 100126 / VC-16).